Reading from the N-terminus, the 440-residue chain is Ribosomal protein uS12 methylthiotransferase RimO (440 aa).

One can recognise an MTTase N-terminal domain in the interval 6 to 116; the sequence is PKVGFVSLGC…VVTAVHEVVP (111 aa). Cys15, Cys51, Cys80, Cys149, Cys153, and Cys156 together coordinate [4Fe-4S] cluster. Residues 135 to 373 form the Radical SAM core domain; it reads LTPRHYAYLK…MAHQQAISAA (239 aa). Positions 376–440 constitute a TRAM domain; the sequence is QLKVGKEIEV…DEYDLWAEPV (65 aa).

This sequence belongs to the methylthiotransferase family. RimO subfamily. It depends on [4Fe-4S] cluster as a cofactor.

It is found in the cytoplasm. It carries out the reaction L-aspartate(89)-[ribosomal protein uS12]-hydrogen + (sulfur carrier)-SH + AH2 + 2 S-adenosyl-L-methionine = 3-methylsulfanyl-L-aspartate(89)-[ribosomal protein uS12]-hydrogen + (sulfur carrier)-H + 5'-deoxyadenosine + L-methionine + A + S-adenosyl-L-homocysteine + 2 H(+). Functionally, catalyzes the methylthiolation of an aspartic acid residue of ribosomal protein uS12. This Pseudomonas paraeruginosa (strain DSM 24068 / PA7) (Pseudomonas aeruginosa (strain PA7)) protein is Ribosomal protein uS12 methylthiotransferase RimO.